The chain runs to 1136 residues: Nuclear pore complex protein Nup133 (1136 aa).

Residues 1-26 form a disordered region; sequence MFSPRGTPGSGRRQAPRTGGRRSVSA.

Belongs to the nucleoporin Nup133 family. Forms part of the Nup160 subcomplex in the nuclear pore which is composed of NUP160, NUP133, NUP107 and Nup96. This complex plays a role in RNA export and in tethering Nup98 and NUP153 to the nucleus. Widely expressed in the embryo and in adult tissues. Higher expression is observed in the brain, testes, ovary, skin, and kidney.

Its subcellular location is the nucleus. The protein localises to the nuclear pore complex. It localises to the chromosome. It is found in the centromere. The protein resides in the kinetochore. In terms of biological role, involved in poly(A)+ RNA transport. Involved in nephrogenesis. The chain is Nuclear pore complex protein Nup133 from Danio rerio (Zebrafish).